The sequence spans 1520 residues: Glutamate synthase [NADPH] large chain (1520 aa).

Residue Cys22 is the For GATase activity of the active site. The region spanning 22 to 415 (CGIGLYAHLK…PGKMLLIDLE (394 aa)) is the Glutamine amidotransferase type-2 domain. The tract at residues 890–913 (GGKSNSGEGGEDPKRFVPDENGDD) is disordered. Basic and acidic residues predominate over residues 900–913 (EDPKRFVPDENGDD). 1060-1112 (LAEAHQTLMLNGLRDRVVLETDGKLMTGRDVVMAALLGAEEFGFATAPLVVLG) contributes to the FMN binding site. The [3Fe-4S] cluster site is built by Cys1113, Cys1119, and Cys1124.

This sequence belongs to the glutamate synthase family. As to quaternary structure, aggregate of 4 catalytic active heterodimers, consisting of a large and a small subunit. [3Fe-4S] cluster serves as cofactor. Requires FAD as cofactor. The cofactor is FMN.

The enzyme catalyses 2 L-glutamate + NADP(+) = L-glutamine + 2-oxoglutarate + NADPH + H(+). It participates in amino-acid biosynthesis; L-glutamate biosynthesis via GLT pathway; L-glutamate from 2-oxoglutarate and L-glutamine (NADP(+) route): step 1/1. Its pathway is energy metabolism; nitrogen metabolism. The chain is Glutamate synthase [NADPH] large chain (gltA) from Bacillus subtilis (strain 168).